Here is a 330-residue protein sequence, read N- to C-terminus: uncharacterized protein (330 aa).

This sequence to H.influenzae HI_0461.

This is an uncharacterized protein from Escherichia coli (strain K12).